A 361-amino-acid polypeptide reads, in one-letter code: Phosphoserine aminotransferase (361 aa).

Arg-42 lines the L-glutamate pocket. Pyridoxal 5'-phosphate is bound by residues 76-77 (AR), Trp-102, Thr-153, Asp-173, and Gln-196. Position 197 is an N6-(pyridoxal phosphate)lysine (Lys-197). 238–239 (NT) is a pyridoxal 5'-phosphate binding site.

It belongs to the class-V pyridoxal-phosphate-dependent aminotransferase family. SerC subfamily. Homodimer. Requires pyridoxal 5'-phosphate as cofactor.

Its subcellular location is the cytoplasm. The enzyme catalyses O-phospho-L-serine + 2-oxoglutarate = 3-phosphooxypyruvate + L-glutamate. The catalysed reaction is 4-(phosphooxy)-L-threonine + 2-oxoglutarate = (R)-3-hydroxy-2-oxo-4-phosphooxybutanoate + L-glutamate. It functions in the pathway amino-acid biosynthesis; L-serine biosynthesis; L-serine from 3-phospho-D-glycerate: step 2/3. Its pathway is cofactor biosynthesis; pyridoxine 5'-phosphate biosynthesis; pyridoxine 5'-phosphate from D-erythrose 4-phosphate: step 3/5. Functionally, catalyzes the reversible conversion of 3-phosphohydroxypyruvate to phosphoserine and of 3-hydroxy-2-oxo-4-phosphonooxybutanoate to phosphohydroxythreonine. This chain is Phosphoserine aminotransferase, found in Yersinia pestis bv. Antiqua (strain Angola).